The sequence spans 396 residues: MIISAASDYRAAAQRILPPFLFHYIDGGAYAEYTLRRNVEDLSEVALRQRVLKNMSDLSLETTLFNEKLSMPVALAPVGLCGMYARRGEVQAAAAADAKGIPFTLSTVSVCPIEEVAPTIKRPMWFQLYVLRDRGFMRNALERAKAAGCSTLVFTVDMPTPGARYRDAHSGMSGPNAALRRYWQAATHPQWAWDVGLNGRPHDLGNISAYLGKPTGLEDYIGWLANNFDPSISWKDLEWIREFWDGPMVIKGILDPEDARDAVRFGADGIVVSNHGGRQLDGVLSSARALPAIADAVKGDIAILADSGIRNGLDVVRMIALGADSVLLGRAYLYALATAGQAGVANLLDLIEKEMKVAMTLTGAKSISEISRDSLVQELGKSLPAALAPLTQGDAA.

One can recognise an FMN hydroxy acid dehydrogenase domain in the interval 1 to 380 (MIISAASDYR…SRDSLVQELG (380 aa)). Tyr-24 lines the substrate pocket. Ser-106 and Gln-127 together coordinate FMN. Residue Tyr-129 coordinates substrate. Thr-155 provides a ligand contact to FMN. Position 164 (Arg-164) interacts with substrate. Lys-251 provides a ligand contact to FMN. Catalysis depends on His-275, which acts as the Proton acceptor. Arg-278 serves as a coordination point for substrate. 306–330 (DSGIRNGLDVVRMIALGADSVLLGR) contributes to the FMN binding site.

The protein belongs to the FMN-dependent alpha-hydroxy acid dehydrogenase family. FMN serves as cofactor.

Its subcellular location is the cell inner membrane. The catalysed reaction is (S)-lactate + A = pyruvate + AH2. In terms of biological role, catalyzes the conversion of L-lactate to pyruvate. Is coupled to the respiratory chain. The sequence is that of L-lactate dehydrogenase from Citrobacter koseri (strain ATCC BAA-895 / CDC 4225-83 / SGSC4696).